The primary structure comprises 103 residues: Nematocin (103 aa).

A signal peptide spans 1–19 (MGSSPILLVLAISIGLASA). A disulfide bridge connects residues Cys20 and Cys25. The residue at position 30 (Tyr30) is a Tyrosine amide. A propeptide spanning residues 31–103 (GRTIRCSSCG…QGGCQTSAMC (73 aa)) is cleaved from the precursor.

Belongs to the vasopressin/oxytocin family. Detected in thermosensory AFD neurons, neurosecretory NSM cells, AVK interneurons, pharyngeal neuron M5, and the mechanosensory DVA neuron. Detected in male-specific CP motor neurons.

The protein resides in the secreted. Its function is as follows. Ligand for the G-protein coupled receptor ntr-1. Plays a role in gustatory associative learning. Also plays a role in male mating behavior. The polypeptide is Nematocin (Caenorhabditis elegans).